Here is a 390-residue protein sequence, read N- to C-terminus: Probable tRNA pseudouridine synthase D 2 (390 aa).

Aspartate 93 (nucleophile) is an active-site residue. In terms of domain architecture, TRUD spans 166-353 (YVLNYYGIQR…YGTRRKMVTP (188 aa)).

This sequence belongs to the pseudouridine synthase TruD family.

It catalyses the reaction uridine(13) in tRNA = pseudouridine(13) in tRNA. Its function is as follows. Could be responsible for synthesis of pseudouridine from uracil-13 in transfer RNAs. This Methanococcus maripaludis (strain DSM 14266 / JCM 13030 / NBRC 101832 / S2 / LL) protein is Probable tRNA pseudouridine synthase D 2.